The following is a 95-amino-acid chain: MSTRNIHVNTASYTLLVAGKKKNTGEEWDVLEFSSLTELKKYRKSHPEKMAFSYSYALSRGVDTQFRHINIAEADHFKQFLRQIKRAGLDIRAIC.

This is an uncharacterized protein from Escherichia coli (strain K12).